Consider the following 614-residue polypeptide: Dihydroxy-acid dehydratase (614 aa).

Aspartate 81 provides a ligand contact to Mg(2+). Position 122 (cysteine 122) interacts with [2Fe-2S] cluster. Mg(2+)-binding residues include aspartate 123 and lysine 124. Lysine 124 is modified (N6-carboxylysine). Cysteine 196 is a binding site for [2Fe-2S] cluster. Residue glutamate 492 coordinates Mg(2+). Catalysis depends on serine 518, which acts as the Proton acceptor.

This sequence belongs to the IlvD/Edd family. Homodimer. Requires [2Fe-2S] cluster as cofactor. It depends on Mg(2+) as a cofactor.

The catalysed reaction is (2R)-2,3-dihydroxy-3-methylbutanoate = 3-methyl-2-oxobutanoate + H2O. The enzyme catalyses (2R,3R)-2,3-dihydroxy-3-methylpentanoate = (S)-3-methyl-2-oxopentanoate + H2O. It participates in amino-acid biosynthesis; L-isoleucine biosynthesis; L-isoleucine from 2-oxobutanoate: step 3/4. Its pathway is amino-acid biosynthesis; L-valine biosynthesis; L-valine from pyruvate: step 3/4. Functionally, functions in the biosynthesis of branched-chain amino acids. Catalyzes the dehydration of (2R,3R)-2,3-dihydroxy-3-methylpentanoate (2,3-dihydroxy-3-methylvalerate) into 2-oxo-3-methylpentanoate (2-oxo-3-methylvalerate) and of (2R)-2,3-dihydroxy-3-methylbutanoate (2,3-dihydroxyisovalerate) into 2-oxo-3-methylbutanoate (2-oxoisovalerate), the penultimate precursor to L-isoleucine and L-valine, respectively. This Ruegeria sp. (strain TM1040) (Silicibacter sp.) protein is Dihydroxy-acid dehydratase.